The primary structure comprises 22 residues: NDMA-dependent alcohol dehydrogenase (22 aa).

Belongs to the zinc-containing alcohol dehydrogenase family. As to quaternary structure, homotetramer. The cofactor is NADH.

The protein localises to the cytoplasm. The enzyme catalyses N,N-dimethyl-4-nitrosoaniline + a primary alcohol = 4-(hydroxylamino)-N,N-dimethylaniline + an aldehyde. It catalyses the reaction ethanol + A = acetaldehyde + AH2. In terms of biological role, this is a novel enzyme, catalytically different from common alcohol dehydrogenases. It is effective in oxidizing ethanol, other primary alcohols and benzylalcohol only in the presence of p-nitroso-N,N-dimethylaniline (NDMA) as an electron acceptor. NADH acts as a cofactor here instead of as a coenzyme. In Rhodococcus erythropolis (Arthrobacter picolinophilus), this protein is NDMA-dependent alcohol dehydrogenase.